The primary structure comprises 217 residues: MSKLRVGIINYGVGNLGSVQNAFAFIQTHFSDVLPHTLEIKVESHPERLQDYDKLLLPGVGAFGNAMTHLKNTHLDEAIREFVQSGKFLIGICLGMQLLFEQSEEFGNHKGLGLIEGKVVGFEHIAPLKVPHIGWNSCNFTPEGKHSKLFRGIADGSFFYFVHSFHIQTQPQFILAQCTYGYPFGAIVHKDNLFAIQAHPEKSHNVGLRLLANFLTL.

The Glutamine amidotransferase type-1 domain maps to 5–217; sequence RVGIINYGVG…LRLLANFLTL (213 aa). The active-site Nucleophile is the Cys93. Active-site residues include His199 and Glu201.

Heterodimer of HisH and HisF.

Its subcellular location is the cytoplasm. The enzyme catalyses 5-[(5-phospho-1-deoxy-D-ribulos-1-ylimino)methylamino]-1-(5-phospho-beta-D-ribosyl)imidazole-4-carboxamide + L-glutamine = D-erythro-1-(imidazol-4-yl)glycerol 3-phosphate + 5-amino-1-(5-phospho-beta-D-ribosyl)imidazole-4-carboxamide + L-glutamate + H(+). It carries out the reaction L-glutamine + H2O = L-glutamate + NH4(+). It participates in amino-acid biosynthesis; L-histidine biosynthesis; L-histidine from 5-phospho-alpha-D-ribose 1-diphosphate: step 5/9. IGPS catalyzes the conversion of PRFAR and glutamine to IGP, AICAR and glutamate. The HisH subunit catalyzes the hydrolysis of glutamine to glutamate and ammonia as part of the synthesis of IGP and AICAR. The resulting ammonia molecule is channeled to the active site of HisF. The chain is Imidazole glycerol phosphate synthase subunit HisH from Helicobacter hepaticus (strain ATCC 51449 / 3B1).